Consider the following 90-residue polypeptide: Conotoxin ba9a (90 aa).

The signal sequence occupies residues 1-27; it reads MHLSLARSAGLMWLLLFAVGNFVGVQP. A propeptide spanning residues 28–62 is cleaved from the precursor; that stretch reads GQITRDVDNGQLADNRRNLQSLRKPMTLFKSLNKR. Residue glutamate 67 is modified to 4-carboxyglutamate. 4-hydroxyproline is present on residues proline 76 and proline 80.

As to expression, expressed by the venom duct.

The protein localises to the secreted. The protein is Conotoxin ba9a of Conus bayani (Bayan's cone).